The sequence spans 367 residues: CST complex subunit STN1 (367 aa).

A DNA-binding region (OB) is located at residues 56–154; the sequence is VEILGTVIGR…EIRVTTYYKV (99 aa). Winged helix-turn-helix (wHTH) stretches follow at residues 190 to 294 and 295 to 367; these read RAFS…YVTR and EDKE…YTAF.

This sequence belongs to the STN1 family. In terms of assembly, component of the CST complex, composed of TEN1, CTC1 and STN1. Interacts with TEN1 and CTC1; the interaction is direct. Interacts with ACD/TPP1.

Its subcellular location is the nucleus. The protein localises to the chromosome. It localises to the telomere. Functionally, component of the CST complex, a complex that binds to single-stranded DNA and is required to protect telomeres from DNA degradation. The CST complex binds single-stranded DNA with high affinity in a sequence-independent manner, while isolated subunits bind DNA with low affinity by themselves. In addition to telomere protection, the CST complex has probably a more general role in DNA metabolism at non-telomeric sites. The chain is CST complex subunit STN1 from Ailuropoda melanoleuca (Giant panda).